Here is a 379-residue protein sequence, read N- to C-terminus: Cobalt-precorrin-5B C(1)-methyltransferase (379 aa).

Belongs to the CbiD family.

It carries out the reaction Co-precorrin-5B + S-adenosyl-L-methionine = Co-precorrin-6A + S-adenosyl-L-homocysteine. It participates in cofactor biosynthesis; adenosylcobalamin biosynthesis; cob(II)yrinate a,c-diamide from sirohydrochlorin (anaerobic route): step 6/10. Catalyzes the methylation of C-1 in cobalt-precorrin-5B to form cobalt-precorrin-6A. The polypeptide is Cobalt-precorrin-5B C(1)-methyltransferase (Salmonella typhimurium (strain LT2 / SGSC1412 / ATCC 700720)).